A 198-amino-acid polypeptide reads, in one-letter code: tRNA (pseudouridine(54)-N(1))-methyltransferase (198 aa).

S-adenosyl-L-methionine-binding positions include leucine 130, glycine 153, 176 to 181, and cysteine 186; that span reads LSPLEL.

This sequence belongs to the methyltransferase superfamily. TrmY family. In terms of assembly, homodimer.

It is found in the cytoplasm. The catalysed reaction is pseudouridine(54) in tRNA + S-adenosyl-L-methionine = N(1)-methylpseudouridine(54) in tRNA + S-adenosyl-L-homocysteine + H(+). In terms of biological role, specifically catalyzes the N1-methylation of pseudouridine at position 54 (Psi54) in tRNAs. The polypeptide is tRNA (pseudouridine(54)-N(1))-methyltransferase (Methanococcus vannielii (strain ATCC 35089 / DSM 1224 / JCM 13029 / OCM 148 / SB)).